The chain runs to 3584 residues: D-lysergyl-peptide-synthetase subunit 1 (3584 aa).

The tract at residues 25-44 (IESINGDKNKSERHTASSSA) is disordered. Over residues 29–39 (NGDKNKSERHT) the composition is skewed to basic and acidic residues. Positions 307-706 (SCCSRPNSQA…LGRKDDQVKI (400 aa)) are adenylation (A) domain 1. Residues 848–917 (REKLLQALFA…TLREIVIVST (70 aa)) form the Carrier 1 domain. Ser-880 is modified (O-(pantetheine 4'-phosphoryl)serine). Positions 962–1353 (EDIYPCTHLQ…EHILTQIHSN (392 aa)) are condensation (C) domain 1. Residues 1396 to 1803 (QAKCQAQPDA…RRKDAQVKIR (408 aa)) form an adenylation (A) domain 2 region. Positions 1948–2016 (TEHEISAIWA…TIRKLALARG (69 aa)) constitute a Carrier 2 domain. O-(pantetheine 4'-phosphoryl)serine is present on Ser-1980. The condensation (C) domain 2 stretch occupies residues 2066-2483 (ERIYPCSPIQ…ALPVLDEDQM (418 aa)). The segment at 2508-2906 (QCIRCPDSPS…GRNDDQVKVR (399 aa)) is adenylation (A) domain 3. A Carrier 3 domain is found at 3041 to 3109 (MEAELQQLVG…RLSDLARIVE (69 aa)). The residue at position 3073 (Ser-3073) is an O-(pantetheine 4'-phosphoryl)serine. Residues 3174-3472 (LYFSKPMASE…VAKSTTWSSD (299 aa)) form a cyclization (Cyc) domain region.

The protein belongs to the NRP synthetase family.

It functions in the pathway alkaloid biosynthesis; ergot alkaloid biosynthesis. D-lysergyl-peptide-synthetase subunit 1; part of the gene cluster that mediates the biosynthesis of fungal ergot alkaloid. DmaW catalyzes the first step of ergot alkaloid biosynthesis by condensing dimethylallyl diphosphate (DMAP) and tryptophan to form 4-dimethylallyl-L-tryptophan. The second step is catalyzed by the methyltransferase easF that methylates 4-dimethylallyl-L-tryptophan in the presence of S-adenosyl-L-methionine, resulting in the formation of 4-dimethylallyl-L-abrine. The catalase easC and the FAD-dependent oxidoreductase easE then transform 4-dimethylallyl-L-abrine to chanoclavine-I which is further oxidized by easD in the presence of NAD(+), resulting in the formation of chanoclavine-I aldehyde. Agroclavine dehydrogenase easG then mediates the conversion of chanoclavine-I aldehyde to agroclavine via a non-enzymatic adduct reaction: the substrate is an iminium intermediate that is formed spontaneously from chanoclavine-I aldehyde in the presence of glutathione. The presence of easA is not required to complete this reaction. Further conversion of agroclavine to paspalic acid is a two-step process involving oxidation of agroclavine to elymoclavine and of elymoclavine to paspalic acid, the second step being performed by the elymoclavine oxidase cloA. Paspalic acid is then further converted to D-lysergic acid. Ergopeptines are assembled from D-lysergic acid and three different amino acids by the D-lysergyl-peptide-synthetases composed each of a monomudular and a trimodular nonribosomal peptide synthetase subunit. LpsB and lpsC encode the monomodular subunits responsible for D-lysergic acid activation and incorporation into the ergopeptine backbone. LpsA1 and A2 subunits encode the trimodular nonribosomal peptide synthetase assembling the tripeptide portion of ergopeptines. LpsA1 is responsible for formation of the major ergopeptine, ergotamine, and lpsA2 for alpha-ergocryptine, the minor ergopeptine of the total alkaloid mixture elaborated by C.purpurea. D-lysergyl-tripeptides are assembled by the nonribosomal peptide synthetases and released as N-(D-lysergyl-aminoacyl)-lactams. Cyclolization of the D-lysergyl-tripeptides is performed by the Fe(2+)/2-ketoglutarate-dependent dioxygenase easH which introduces a hydroxyl group into N-(D-lysergyl-aminoacyl)-lactam at alpha-C of the aminoacyl residue followed by spontaneous condensation with the terminal lactam carbonyl group. The protein is D-lysergyl-peptide-synthetase subunit 1 of Claviceps purpurea (strain 20.1) (Ergot fungus).